Reading from the N-terminus, the 315-residue chain is UDP-N-acetylenolpyruvoylglucosamine reductase (315 aa).

Residues 27-207 (RVGGPADVLY…TKRMNAITAR (181 aa)) form the FAD-binding PCMH-type domain. The active site involves R172. Positions 214–236 (IREKTSGSTFANPDPPGTPNQRK) are disordered. S221 functions as the Proton donor in the catalytic mechanism. Residue E297 is part of the active site.

It belongs to the MurB family. It depends on FAD as a cofactor.

The protein localises to the cytoplasm. It carries out the reaction UDP-N-acetyl-alpha-D-muramate + NADP(+) = UDP-N-acetyl-3-O-(1-carboxyvinyl)-alpha-D-glucosamine + NADPH + H(+). The protein operates within cell wall biogenesis; peptidoglycan biosynthesis. Cell wall formation. The protein is UDP-N-acetylenolpyruvoylglucosamine reductase of Maricaulis maris (strain MCS10) (Caulobacter maris).